We begin with the raw amino-acid sequence, 581 residues long: uncharacterized protein (581 aa).

The protein belongs to the UbiD family.

This is an uncharacterized protein from Chlamydia caviae (strain ATCC VR-813 / DSM 19441 / 03DC25 / GPIC) (Chlamydophila caviae).